The chain runs to 544 residues: Glucose-6-phosphate isomerase (544 aa).

The active-site Proton donor is Glu354. Catalysis depends on residues His385 and Lys510.

The protein belongs to the GPI family.

The protein resides in the cytoplasm. It catalyses the reaction alpha-D-glucose 6-phosphate = beta-D-fructose 6-phosphate. Its pathway is carbohydrate biosynthesis; gluconeogenesis. The protein operates within carbohydrate degradation; glycolysis; D-glyceraldehyde 3-phosphate and glycerone phosphate from D-glucose: step 2/4. Its function is as follows. Catalyzes the reversible isomerization of glucose-6-phosphate to fructose-6-phosphate. This Deinococcus deserti (strain DSM 17065 / CIP 109153 / LMG 22923 / VCD115) protein is Glucose-6-phosphate isomerase.